Consider the following 187-residue polypeptide: Ribosome-recycling factor (187 aa).

This sequence belongs to the RRF family.

It localises to the cytoplasm. Responsible for the release of ribosomes from messenger RNA at the termination of protein biosynthesis. May increase the efficiency of translation by recycling ribosomes from one round of translation to another. The chain is Ribosome-recycling factor from Orientia tsutsugamushi (strain Ikeda) (Rickettsia tsutsugamushi).